Consider the following 90-residue polypeptide: Small ribosomal subunit protein bS20 (90 aa).

The disordered stretch occupies residues 1-27 (MANSAQAKKRARQNEKRELHNASQRSA).

Belongs to the bacterial ribosomal protein bS20 family.

Binds directly to 16S ribosomal RNA. The polypeptide is Small ribosomal subunit protein bS20 (Coxiella burnetii (strain CbuK_Q154) (Coxiella burnetii (strain Q154))).